Reading from the N-terminus, the 124-residue chain is uncharacterized protein (124 aa).

Disordered stretches follow at residues Met-1–Pro-26 and Ile-100–Arg-124. The segment covering Gly-102–Tyr-115 has biased composition (polar residues).

The protein resides in the cytoplasm. It localises to the cytoskeleton. It is found in the cilium basal body. This is an uncharacterized protein from Rattus norvegicus (Rat).